Consider the following 541-residue polypeptide: Chaperonin GroEL (541 aa).

Residues 29–32 (TLGP), 86–90 (DGTTT), Gly413, 477–479 (DAL), and Asp493 each bind ATP.

The protein belongs to the chaperonin (HSP60) family. As to quaternary structure, forms a cylinder of 14 subunits composed of two heptameric rings stacked back-to-back. Interacts with the co-chaperonin GroES.

The protein localises to the cytoplasm. It catalyses the reaction ATP + H2O + a folded polypeptide = ADP + phosphate + an unfolded polypeptide.. Its function is as follows. Together with its co-chaperonin GroES, plays an essential role in assisting protein folding. The GroEL-GroES system forms a nano-cage that allows encapsulation of the non-native substrate proteins and provides a physical environment optimized to promote and accelerate protein folding. The chain is Chaperonin GroEL from Clostridium botulinum (strain ATCC 19397 / Type A).